The primary structure comprises 213 residues: Glycerol-3-phosphate acyltransferase (213 aa).

5 helical membrane passes run I3–S23, K51–A71, D78–F98, A115–F135, and L140–P160.

It belongs to the PlsY family. As to quaternary structure, probably interacts with PlsX.

It localises to the cell inner membrane. It carries out the reaction an acyl phosphate + sn-glycerol 3-phosphate = a 1-acyl-sn-glycero-3-phosphate + phosphate. It participates in lipid metabolism; phospholipid metabolism. Its function is as follows. Catalyzes the transfer of an acyl group from acyl-phosphate (acyl-PO(4)) to glycerol-3-phosphate (G3P) to form lysophosphatidic acid (LPA). This enzyme utilizes acyl-phosphate as fatty acyl donor, but not acyl-CoA or acyl-ACP. The polypeptide is Glycerol-3-phosphate acyltransferase (Burkholderia cenocepacia (strain ATCC BAA-245 / DSM 16553 / LMG 16656 / NCTC 13227 / J2315 / CF5610) (Burkholderia cepacia (strain J2315))).